The following is a 184-amino-acid chain: Oligoribonuclease (184 aa).

One can recognise an Exonuclease domain in the interval 8 to 169 (LIWIDLEMTG…EDIHESIIEL (162 aa)). Tyr129 is an active-site residue.

This sequence belongs to the oligoribonuclease family.

Its subcellular location is the cytoplasm. 3'-to-5' exoribonuclease specific for small oligoribonucleotides. This is Oligoribonuclease from Buchnera aphidicola subsp. Schizaphis graminum (strain Sg).